We begin with the raw amino-acid sequence, 385 residues long: Benzoylsuccinyl-CoA thiolase subunit BbsB (385 aa).

Arg-19 contacts CoA. The active-site Acyl-thioester intermediate is the Cys-84. The CoA site is built by Gly-121, Arg-193, Cys-204, and Cys-205.

The protein belongs to the thiolase-like superfamily. Thiolase family. In terms of assembly, heterotetramer composed of two BbsA subunits and two BbsB subunits. BbsB forms homodimeric subcomplexes. Both BbsA and BbsB are essential for enzymatic activity.

It catalyses the reaction (S)-2-benzoylsuccinyl-CoA + CoA = benzoyl-CoA + succinyl-CoA. Its pathway is xenobiotic degradation; toluene degradation. Functionally, component of the BbsAB thiolase complex, which catalyzes the thiolytic cleavage of (S)-2-benzoylsuccinyl-CoA to succinyl-CoA and benzoyl-CoA, the final step of anaerobic toluene metabolism. This chain is Benzoylsuccinyl-CoA thiolase subunit BbsB, found in Thauera aromatica.